Here is a 255-residue protein sequence, read N- to C-terminus: Flagellar brake protein YcgR (255 aa).

The region spanning 130-245 (QRREHFRVPL…MAAHLQRFVM (116 aa)) is the PilZ domain.

The protein belongs to the YcgR family. In terms of assembly, monomer. Interacts with the flagellar basal bodies.

The protein localises to the bacterial flagellum basal body. In terms of biological role, acts as a flagellar brake, regulating swimming and swarming in a bis-(3'-5') cyclic diguanylic acid (c-di-GMP)-dependent manner. Binds 1 c-di-GMP dimer per subunit. Increasing levels of c-di-GMP lead to decreased motility. The sequence is that of Flagellar brake protein YcgR from Thiobacillus denitrificans (strain ATCC 25259 / T1).